The chain runs to 307 residues: Ubiquitin recognition factor in ER-associated degradation protein 1 (307 aa).

M1 is modified (N-acetylmethionine). 5 positions are modified to phosphoserine: S129, S231, S245, S247, and S299. Disordered regions lie at residues 230–255 and 288–307; these read GSGN…GDIK and GRFI…GRKP.

Belongs to the UFD1 family. Heterodimer with NPLOC4, this heterodimer binds VCP and inhibits Golgi membrane fusion. Interacts with USP13. Interacts with ZFAND2B; probably through VCP.

It localises to the nucleus. The protein resides in the cytoplasm. Its subcellular location is the cytosol. Its pathway is protein degradation; proteasomal ubiquitin-dependent pathway. Its function is as follows. Essential component of the ubiquitin-dependent proteolytic pathway which degrades ubiquitin fusion proteins. The ternary complex containing UFD1, VCP and NPLOC4 binds ubiquitinated proteins and is necessary for the export of misfolded proteins from the ER to the cytoplasm, where they are degraded by the proteasome. The NPLOC4-UFD1-VCP complex regulates spindle disassembly at the end of mitosis and is necessary for the formation of a closed nuclear envelope. It may be involved in the development of some ectoderm-derived structures. Acts as a negative regulator of type I interferon production via the complex formed with VCP and NPLOC4, which binds to RIGI and recruits RNF125 to promote ubiquitination and degradation of RIGI. This chain is Ubiquitin recognition factor in ER-associated degradation protein 1, found in Mus musculus (Mouse).